Consider the following 416-residue polypeptide: Hepatic and glial cell adhesion molecule (416 aa).

An N-terminal signal peptide occupies residues 1-33 (MKRERGALSRASRALRLAPFVYLLLIQTDPLEG). Residues 34–142 (VNITSPVRLI…GEKTINLTVD (109 aa)) enclose the Ig-like V-type domain. Residues 34 to 240 (VNITSPVRLI…VKITVYRRSS (207 aa)) are Extracellular-facing. Residues asparagine 35, asparagine 138, asparagine 167, and asparagine 189 are each glycosylated (N-linked (GlcNAc...) asparagine). Positions 148 to 234 (PQVLVASTTV…QGRSLPVKIT (87 aa)) constitute an Ig-like C2-type domain. Cysteine 168 and cysteine 217 are disulfide-bonded. The chain crosses the membrane as a helical span at residues 241–261 (LYIILSTGGIFLLVTLVTVCA). Residues 262-416 (CWKPSKRKQK…DEAGPVEISA (155 aa)) lie on the Cytoplasmic side of the membrane. A disordered region spans residues 273-416 (LEKQNSLEYM…DEAGPVEISA (144 aa)). Serine 278 carries the phosphoserine modification. Positions 285-306 (NDDRLKPEADTLPRSGEQERKN) are enriched in basic and acidic residues. Serine 350 and serine 377 each carry phosphoserine. Over residues 383 to 398 (SSPGRSRSASRTLRTA) the composition is skewed to low complexity.

In terms of assembly, homodimer. Dimer formation occurs predominantly through cis interactions on the cell surface. Part of a complex containing MLC1, TRPV4, AQP4 and ATP1B1. Interacts with CLCN2. In terms of processing, N-glycosylated.

The protein resides in the cytoplasm. Its subcellular location is the cell membrane. In terms of biological role, involved in regulating cell motility and cell-matrix interactions. May inhibit cell growth through suppression of cell proliferation. In glia, associates and targets CLCN2 at astrocytic processes and myelinated fiber tracts where it may regulate transcellular chloride flux involved in neuron excitability. This chain is Hepatic and glial cell adhesion molecule, found in Homo sapiens (Human).